Here is a 155-residue protein sequence, read N- to C-terminus: MRMVIAAVGRLRQGPEAKLIADYLDRHAKAGRALGLPPVTLAEVEDKRGGGMVAEAALLARAIPQGAALVVLDERGQMLSSPEFAARIAGWRDQARDVAFVIGGADGIDPGLRDGADLAISFGRMVWPHMLVRVMLAEQIYRATTILAGNPYHRE.

Residues L72, G103, and 122 to 127 (FGRMVW) contribute to the S-adenosyl-L-methionine site.

Belongs to the RNA methyltransferase RlmH family. As to quaternary structure, homodimer.

It localises to the cytoplasm. The enzyme catalyses pseudouridine(1915) in 23S rRNA + S-adenosyl-L-methionine = N(3)-methylpseudouridine(1915) in 23S rRNA + S-adenosyl-L-homocysteine + H(+). Specifically methylates the pseudouridine at position 1915 (m3Psi1915) in 23S rRNA. The polypeptide is Ribosomal RNA large subunit methyltransferase H (Paracoccus denitrificans (strain Pd 1222)).